Here is a 132-residue protein sequence, read N- to C-terminus: Small ribosomal subunit protein uS9 (132 aa).

This sequence belongs to the universal ribosomal protein uS9 family.

This chain is Small ribosomal subunit protein uS9 (rps9), found in Thermoplasma volcanium (strain ATCC 51530 / DSM 4299 / JCM 9571 / NBRC 15438 / GSS1).